A 187-amino-acid polypeptide reads, in one-letter code: UPF0340 protein SPJ_0612 (187 aa).

It belongs to the UPF0340 family.

This is UPF0340 protein SPJ_0612 from Streptococcus pneumoniae (strain JJA).